The chain runs to 353 residues: Survival factor 2 (353 aa).

This sequence belongs to the SVF1 family.

The protein localises to the cytoplasm. It is found in the nucleus. The sequence is that of Survival factor 2 (svf2) from Schizosaccharomyces pombe (strain 972 / ATCC 24843) (Fission yeast).